A 196-amino-acid chain; its full sequence is ATP-dependent Clp protease proteolytic subunit (196 aa).

Ser-101 (nucleophile) is an active-site residue. Residue His-126 is part of the active site.

Belongs to the peptidase S14 family. In terms of assembly, component of the chloroplastic Clp protease core complex.

The protein resides in the plastid. Its subcellular location is the chloroplast stroma. It catalyses the reaction Hydrolysis of proteins to small peptides in the presence of ATP and magnesium. alpha-casein is the usual test substrate. In the absence of ATP, only oligopeptides shorter than five residues are hydrolyzed (such as succinyl-Leu-Tyr-|-NHMec, and Leu-Tyr-Leu-|-Tyr-Trp, in which cleavage of the -Tyr-|-Leu- and -Tyr-|-Trp bonds also occurs).. In terms of biological role, cleaves peptides in various proteins in a process that requires ATP hydrolysis. Has a chymotrypsin-like activity. Plays a major role in the degradation of misfolded proteins. The polypeptide is ATP-dependent Clp protease proteolytic subunit (Citrus sinensis (Sweet orange)).